The following is a 220-amino-acid chain: Small ribosomal subunit protein uS3 (220 aa).

Residues 38-106 (IREFVKKSLN…EVFLNIVEVR (69 aa)) enclose the KH type-2 domain.

Belongs to the universal ribosomal protein uS3 family. Part of the 30S ribosomal subunit. Forms a tight complex with proteins S10 and S14.

Functionally, binds the lower part of the 30S subunit head. Binds mRNA in the 70S ribosome, positioning it for translation. The protein is Small ribosomal subunit protein uS3 of Myxococcus xanthus (strain DK1622).